The primary structure comprises 662 residues: Forkhead box protein O1 (662 aa).

Disordered stretches follow at residues 1-62 (MAEA…PSAS) and 122-165 (GCLH…SRRN). Threonine 24 is modified (phosphothreonine; by PKB/AKT1 or PKB/AKT2 and SGK1). Residues 33–62 (SQSNSATSSPAPSGGAAANPDAAAGLPSAS) are compositionally biased toward low complexity. A compositionally biased stretch (pro residues) spans 126–146 (PAPPQQPPPPGPLSQHPPVPP). The fork-head DNA-binding region spans 167–261 (WGNLSYADLI…KSGKSPRRRA (95 aa)). 2 DNA-binding regions span residues 218–225 (NSIRHNLS) and 241–244 (SSWW). Serine 219 is subject to Phosphoserine; by STK4/MST1. Residues serine 225, serine 241, and serine 242 each carry the phosphoserine modification. The interval 241-342 (SSWWMLNPEG…GRLSPIMTEQ (102 aa)) is disordered. An N6-acetyllysine mark is found at lysine 252 and lysine 255. At serine 256 the chain carries Phosphoserine; by CDK1. Arginine 258 and arginine 260 each carry omega-N-methylarginine; by PRMT1. A Nuclear localization signal motif is present at residues 258–260 (RRR). Phosphoserine; by PKB/AKT1 and SGK1 is present on serine 263. An N6-acetyllysine mark is found at lysine 269, lysine 272, and lysine 281. The span at 271 to 282 (AKSRGRAAKKKA) shows a compositional bias: basic residues. The segment at 290-570 (GAGDSPGSQF…RLTQEKTALQ (281 aa)) is sufficient for interaction with NLK. Residues serine 294 and serine 305 each carry the phosphoserine modification. Positions 316–333 (NWSTFRPRTSSNASTISG) are enriched in polar residues. Serine 326 carries the phosphoserine; by PKB/AKT1 modification. Position 329 is a phosphoserine; by CK1 and SGK1 (serine 329). Serine 332 carries the phosphoserine; by CK1 modification. Residue serine 336 is modified to Phosphoserine; by DYRK1A. Threonine 340 carries the phosphothreonine modification. The segment at 370-466 (SEISNPENME…GGMAQYNCAA (97 aa)) is required for interaction with RUNX2. Residue lysine 430 is modified to N6-acetyllysine. Residues 469 to 473 (LKELL) carry the Required for interaction with SIRT1 motif.

Interacts with LRPPRC. Interacts with RUNX2; the interaction inhibits RUNX2 transcriptional activity and mediates the IGF1/insulin-dependent BGLAP expression in osteoblasts Interacts with PPP2R1A; the interaction regulates the dephosphorylation of FOXO1 at Thr-24 and Ser-263 leading to its nuclear import. Interacts with NLK. Interacts with SIRT1; the interaction results in the deacetylation of FOXO1 leading to activation of FOXO1-mediated transcription of genes involved in DNA repair and stress resistance. Binds to CDK1. Interacts with the 14-3-3 proteins, YWHAG and YWHAZ; the interactions require insulin-stimulated phosphorylation on Thr-24, promote nuclear exit and loss of transcriptional activity. Interacts with SKP2; the interaction ubiquitinates FOXO1 leading to its proteasomal degradation. The interaction requires the presence of KRIT1. Interacts (via the C-terminal half) with ATF4 (via its DNA binding domain); the interaction occurs in osteoblasts, regulates glucose homeostasis via suppression of beta-cell proliferation and subsequent decrease in insulin production. Interacts with PRMT1; the interaction methylates FOXO1, prevents PKB/AKT1 phosphorylation and retains FOXO1 in the nucleus. Interacts with EP300 and CREBBP; the interactions acetylate FOXO1. Interacts with SIRT2; the interaction is disrupted in response to oxidative stress or serum deprivation, leading to increased level of acetylated FOXO1, which promotes stress-induced autophagy by stimulating E1-like activating enzyme ATG7. Interacts (acetylated form) with ATG7; the interaction is increased in response to oxidative stress or serum deprivation and promotes the autophagic process leading to cell death. Interacts (acetylated form) with PPARG. Interacts with XBP1; this interaction is direct and leads to FOXO1 ubiquitination and degradation via the proteasome pathway. Interacts (via the Fork-head domain) with CEBPA; the interaction increases when FOXO1 is deacetylated. Interacts with WDFY2. Forms a complex with WDFY2 and AKT1. Interacts with CRY1. Interacts with PPIA/CYPA; the interaction promotes FOXO1 dephosphorylation, nuclear accumulation and transcriptional activity. Interacts with TOX4; FOXO1 is required for full induction of TOX4-dependent activity and the interaction is inhibited by insulin. Interacts (when phosphorylated on Ser-263) with STUB1/CHIP. In terms of processing, phosphorylation by NLK promotes nuclear export and inhibits the transcriptional activity. In response to growth factors, phosphorylation on Thr-24, Ser-263 and Ser-326 by PKB/AKT1 promotes nuclear export and inactivation of transactivational activity. Phosphorylation on Thr-24 is required for binding 14-3-3 proteins. Phosphorylation of Ser-263 decreases DNA-binding activity and promotes the phosphorylation of Thr-24 and Ser-326, permitting phosphorylation of Ser-329 and Ser-332, probably by CDK1, leading to nuclear exclusion and loss of function. Stress signals, such as response to oxygen or nitric oxide, attenuate the PKB/AKT1-mediated phosphorylation leading to nuclear retention. Phosphorylation of Ser-336 is independent of IGF1 and leads to reduced function. Dephosphorylated on Thr-24 and Ser-263 by PP2A in beta-cells under oxidative stress leading to nuclear retention. Phosphorylation of Ser-256 by CDK1 disrupts binding of 14-3-3 proteins leading to nuclear accumulation and has no effect on DNA binding nor transcriptional activity. Phosphorylation by STK4/MST1 on Ser-219, upon oxidative stress, inhibits binding to 14-3-3 proteins and nuclear export. PPIA/CYPA promotes its dephosphorylation on Ser-263. Post-translationally, ubiquitinated by SKP2. Ubiquitination leads to proteasomal degradation. Ubiquitinated by STUB1/CHIP; when Ser-263 is phosphorylated. Methylation inhibits AKT1-mediated phosphorylation at Ser-263 and is increased by oxidative stress. In terms of processing, acetylated. Acetylation at Lys-269 and Lys-281 are necessary for autophagic cell death induction. Deacetylated by SIRT2 in response to oxidative stress or serum deprivation, thereby negatively regulating FOXO1-mediated autophagic cell death. Once in the nucleus, acetylated by CREBBP/EP300. Acetylation diminishes the interaction with target DNA and attenuates the transcriptional activity. It increases the phosphorylation at Ser-263. Deacetylation by SIRT1 results in reactivation of the transcriptional activity. Oxidative stress by hydrogen peroxide treatment appears to promote deacetylation and uncoupling of insulin-induced phosphorylation. By contrast, resveratrol acts independently of acetylation. Acetylated at Lys-430, promoting its localization to the nucleus and transcription factor activity. Deacetylation at Lys-430 by SIRT6, promotes its translocation into the cytoplasm, preventing its transcription factor activity. Deacetylation and subsequent inhibition by SIRT6 has different effects depending on cell types: it inhibits gluconeogenesis in hepatocytes, promotes glucose sensing in pancreatic beta-cells and regulates lipid catabolism in brown adipocytes. In terms of tissue distribution, highly in subcutaneous adipose and visceral adipose tissues. Levels higher in piglets than in adults. Also expressed at lower levels in liver and muscle.

It localises to the cytoplasm. It is found in the nucleus. Transcription factor that is the main target of insulin signaling and regulates metabolic homeostasis in response to oxidative stress. Binds to the insulin response element (IRE) with consensus sequence 5'-TT[G/A]TTTTG-3' and the related Daf-16 family binding element (DBE) with consensus sequence 5'-TT[G/A]TTTAC-3'. Activity suppressed by insulin. Main regulator of redox balance and osteoblast numbers and controls bone mass. Orchestrates the endocrine function of the skeleton in regulating glucose metabolism. Also acts as a key regulator of chondrogenic commitment of skeletal progenitor cells in response to lipid availability: when lipids levels are low, translocates to the nucleus and promotes expression of SOX9, which induces chondrogenic commitment and suppresses fatty acid oxidation. Acts synergistically with ATF4 to suppress osteocalcin/BGLAP activity, increasing glucose levels and triggering glucose intolerance and insulin insensitivity. Also suppresses the transcriptional activity of RUNX2, an upstream activator of osteocalcin/BGLAP. Acts as an inhibitor of glucose sensing in pancreatic beta cells by acting as a transcription repressor and suppressing expression of PDX1. In hepatocytes, promotes gluconeogenesis by acting together with PPARGC1A and CEBPA to activate the expression of genes such as IGFBP1, G6PC1 and PCK1. Also promotes gluconeogenesis by directly promoting expression of PPARGC1A and G6PC1. Important regulator of cell death acting downstream of CDK1, PKB/AKT1 and STK4/MST1. Promotes neural cell death. Mediates insulin action on adipose tissue. Regulates the expression of adipogenic genes such as PPARG during preadipocyte differentiation and, adipocyte size and adipose tissue-specific gene expression in response to excessive calorie intake. Regulates the transcriptional activity of GADD45A and repair of nitric oxide-damaged DNA in beta-cells. Required for the autophagic cell death induction in response to starvation or oxidative stress in a transcription-independent manner. Mediates the function of MLIP in cardiomyocytes hypertrophy and cardiac remodeling. Positive regulator of apoptosis in cardiac smooth muscle cells as a result of its transcriptional activation of pro-apoptotic genes. Regulates endothelial cell (EC) viability and apoptosis in a PPIA/CYPA-dependent manner via transcription of CCL2 and BCL2L11 which are involved in EC chemotaxis and apoptosis. This chain is Forkhead box protein O1 (FOXO1), found in Sus scrofa (Pig).